Consider the following 71-residue polypeptide: Beta-defensin 10 (71 aa).

Residues 1–23 form the signal peptide; that stretch reads MKTLCSLLLIGCLLFSYDTPVVG. 3 cysteine pairs are disulfide-bonded: Cys37/Cys66, Cys44/Cys59, and Cys49/Cys67.

This sequence belongs to the beta-defensin family.

The protein resides in the secreted. Functionally, has antibacterial activity. The protein is Beta-defensin 10 (Defb10) of Rattus norvegicus (Rat).